The sequence spans 388 residues: WD repeat-containing protein 55 (388 aa).

Over residues M1–L20 the composition is skewed to acidic residues. Residues M1–P33 are disordered. WD repeat units follow at residues V37 to K76, H83 to R122, A126 to D164, Q167 to L206, P209 to D248, A251 to T290, and Q293 to V333. Residue S355 is modified to Phosphoserine. Residues R364 to D388 form a disordered region. Over residues A370–E379 the composition is skewed to basic and acidic residues.

It belongs to the WD repeat WDR55 family.

It is found in the nucleus. The protein resides in the nucleolus. The protein localises to the cytoplasm. Its function is as follows. Nucleolar protein that acts as a modulator of rRNA synthesis. Plays a central role during organogenesis. The chain is WD repeat-containing protein 55 (Wdr55) from Mus musculus (Mouse).